A 597-amino-acid polypeptide reads, in one-letter code: MPSARLLVLFGSQTGTAQDVSERLGREARRRQLSCRVEELDSYPVVNLINEPLVIFVCATTGQGDPPDNMKSFWRFIFRRSLPSTALRQMDFAVLGLGDSSYAKFNFVAKKLHRRLLQLGGSALLPVCLGDDQHELGPDAAIDPWLQDLWEKVLGPHPVPLNLDLSPPGVLWPSKFTLQFLKDTPSSGPEELCAAGTDPQGPPSELQPFLAPMVSNQRVTGPSHFQDVRLIEFDISGSGISFAAGDLVLIQPENTASHVQQFCQALGLDPEQHFTLQPREPGVTCPTRLPQPCSVRRLVSQYLDIASVPRRSFFELLACLSPHELEREKLWEFGSARGQEELCEYCTRPRRTALEVLCDFPHTAAAVPPDYLLDLLPLIRPRAFSIASSLRAHPSRLQILVAVVQYQTRLREPRRGLCSSWLASLDPAQGPVRVPLWVRSGGLTFPKTPDVPVIMVGPGTGVAPFRAAIQERVAQGETGNVLFFGCRRRDQDFYWEAEWEQLQARGCLTLVTAFSREQEQKVYVQHRLRALGPLVWELLDGRGAHFYLAGNAKYMPADVCDTLLSIFREEGGLSDPDAAAYLAQLQRTLRFQTETWA.

Residues 6-150 (LLVLFGSQTG…AIDPWLQDLW (145 aa)) form the Flavodoxin-like domain. FMN-binding positions include 12 to 17 (SQTGTA), 59 to 62 (ATTG), 97 to 106 (LGDSSYAKFN), and Asp132. The FAD-binding FR-type domain maps to 206 to 446 (LQPFLAPMVS…WVRSGGLTFP (241 aa)). FAD contacts are provided by residues Arg350, 382–385 (RAFS), and 416–419 (GLCS). Residues Thr460, 515–516 (SR), 521–525 (KVYVQ), and Asp558 each bind NADP(+). Position 596 (Trp596) interacts with FAD.

This sequence belongs to the NADPH-dependent diflavin oxidoreductase NDOR1 family. The protein in the N-terminal section; belongs to the flavodoxin family. It in the C-terminal section; belongs to the flavoprotein pyridine nucleotide cytochrome reductase family. Interacts with CIAPIN1; as part of the cytosolic iron-sulfur (Fe-S) protein assembly (CIA) machinery. Interacts with DCPS. Requires FAD as cofactor. FMN serves as cofactor.

The protein localises to the cytoplasm. It localises to the perinuclear region. The enzyme catalyses 2 oxidized [2Fe-2S]-[protein] + NADPH = 2 reduced [2Fe-2S]-[protein] + NADP(+) + H(+). Functionally, NADPH-dependent reductase which is a central component of the cytosolic iron-sulfur (Fe-S) protein assembly (CIA) machinery. Transfers electrons from NADPH via its FAD and FMN prosthetic groups to the [2Fe-2S] cluster of CIAPIN1, another key component of the CIA machinery. In turn, this reduced cluster provides electrons for assembly of cytosolic iron-sulfur cluster proteins. It can also reduce the [2Fe-2S] cluster of CISD1 and activate this protein implicated in Fe/S cluster repair. In vitro can fully activate methionine synthase/MTR in the presence of soluble cytochrome b5/CYB5A. The protein is NADPH-dependent diflavin oxidoreductase 1 of Bos taurus (Bovine).